The following is a 159-amino-acid chain: Phosphopantetheine adenylyltransferase (159 aa).

Threonine 8 serves as a coordination point for substrate. Residues 8 to 9 and histidine 16 contribute to the ATP site; that span reads TF. The substrate site is built by lysine 40, threonine 72, and arginine 86. Residues 87–89, glutamate 97, and 122–128 contribute to the ATP site; these read GLR and YSFLSSS.

It belongs to the bacterial CoaD family. As to quaternary structure, homohexamer. Mg(2+) serves as cofactor.

The protein localises to the cytoplasm. It carries out the reaction (R)-4'-phosphopantetheine + ATP + H(+) = 3'-dephospho-CoA + diphosphate. The protein operates within cofactor biosynthesis; coenzyme A biosynthesis; CoA from (R)-pantothenate: step 4/5. In terms of biological role, reversibly transfers an adenylyl group from ATP to 4'-phosphopantetheine, yielding dephospho-CoA (dPCoA) and pyrophosphate. The polypeptide is Phosphopantetheine adenylyltransferase (Prochlorococcus marinus subsp. pastoris (strain CCMP1986 / NIES-2087 / MED4)).